A 333-amino-acid polypeptide reads, in one-letter code: Large ribosomal subunit protein uL3 (333 aa).

Basic residues-rich tracts occupy residues 1–10 (MGMKRNRPRR) and 17–26 (PRKRAKRPVP). Positions 1–29 (MGMKRNRPRRGSLAFSPRKRAKRPVPKIR) are disordered.

The protein belongs to the universal ribosomal protein uL3 family. Part of the 50S ribosomal subunit. Forms a cluster with proteins L14 and L24e.

In terms of biological role, one of the primary rRNA binding proteins, it binds directly near the 3'-end of the 23S rRNA, where it nucleates assembly of the 50S subunit. The polypeptide is Large ribosomal subunit protein uL3 (Methanococcus aeolicus (strain ATCC BAA-1280 / DSM 17508 / OCM 812 / Nankai-3)).